The chain runs to 341 residues: Terpene synthase 9 (341 aa).

The DDxx(x)D/E motif signature appears at 81–86; that stretch reads DDILDS. The NDxxSxxxD/E motif signature appears at 222–230; sequence NDMASYCKE.

This sequence belongs to the terpene synthase family.

The enzyme catalyses (2E,6E)-farnesyl diphosphate = (1S,2S,4R)-beta-elemene + diphosphate. The catalysed reaction is (2E,6E)-farnesyl diphosphate = germacrene D + diphosphate. Terpene synthase that converts its substrate farnesyl diphosphate (FPP) into the sesquiterpenes beta-elemene, germacrene D and a yet unidentified sesquiterpene. The protein is Terpene synthase 9 of Dictyostelium purpureum (Slime mold).